The sequence spans 319 residues: ADP-ribosyl cyclase/cyclic ADP-ribose hydrolase 2 (319 aa).

The signal sequence occupies residues 1–33 (MAVQACALSLRLGLWMSLLLPVLPGAGARAAGA). Disulfide bonds link cysteine 52–cysteine 68, cysteine 84–cysteine 164, and cysteine 145–cysteine 158. N-linked (GlcNAc...) asparagine glycosylation is found at asparagine 67 and asparagine 96. Tryptophan 110 contributes to the NAD(+) binding site. Tryptophan 110 provides a ligand contact to nicotinamide. Asparagine 149 carries an N-linked (GlcNAc...) asparagine glycan. Tryptophan 173 contacts NAD(+). An N-linked (GlcNAc...) asparagine glycan is attached at asparagine 193. Glutamate 211 contacts NAD(+). Disulfide bonds link cysteine 239/cysteine 260 and cysteine 272/cysteine 281. Residue serine 294 is the site of GPI-anchor amidated serine attachment. Positions 295–319 (PALHAIGDISLIISLLVALASSSQA) are excised as a propeptide.

Belongs to the ADP-ribosyl cyclase family. Homodimer. In terms of tissue distribution, pancreatic islets, kidney, spleen, heart, thymus, intestine and salivary gland.

It localises to the cell membrane. It carries out the reaction NAD(+) + H2O = ADP-D-ribose + nicotinamide + H(+). The enzyme catalyses NAD(+) = cyclic ADP-beta-D-ribose + nicotinamide + H(+). The catalysed reaction is cyclic ADP-beta-D-ribose + H2O = ADP-D-ribose. Its function is as follows. Catalyzes both the synthesis of cyclic ADP-beta-D-ribose (cADPR) from NAD(+), and its hydrolysis to ADP-D-ribose (ADPR). Cyclic ADPR is known to serve as an endogenous second messenger that elicits calcium release from intracellular stores, and thus regulates the mobilization of intracellular calcium. May be involved in pre-B-cell growth. This chain is ADP-ribosyl cyclase/cyclic ADP-ribose hydrolase 2 (Bst1), found in Rattus norvegicus (Rat).